Here is a 257-residue protein sequence, read N- to C-terminus: Asnovolin H dehydrogenase nvfC (257 aa).

A helical membrane pass occupies residues 7-26 (YVLIITGSASGIGLATATIA). Ile-11 serves as a coordination point for NADP(+). 3 N-linked (GlcNAc...) asparagine glycosylation sites follow: Asn-57, Asn-92, and Asn-110. Residues Arg-119, Tyr-151, Lys-155, and Val-184 each contribute to the NADP(+) site. The active-site Proton donor is Tyr-151. Residue Lys-155 is the Lowers pKa of active site Tyr of the active site.

Belongs to the short-chain dehydrogenases/reductases (SDR) family.

The protein localises to the membrane. It carries out the reaction asnovolin H + A = chermesin D + AH2. It participates in secondary metabolite biosynthesis; terpenoid biosynthesis. Short chain dehydrogenase; part of the gene cluster that mediates the biosynthesis of novofumigatonin, a heavily oxygenated meroterpenoid containing a unique orthoester moiety. The first step of the pathway is the synthesis of 3,5-dimethylorsellinic acid (DMOA) by the polyketide synthase nvfA via condensation of one acetyl-CoA starter unit with 3 malonyl-CoA units and 2 methylations. DMOA is then converted to farnesyl-DMOA by the farnesyltransferase nvfB. Epoxydation by FAD-dependent monooxygenase nvfK, followed by a protonation-initiated cyclization catalyzed by the terpene cyclase nvfL leads to the production of asnavolin H. The short chain dehydrogenase nvfC then as a 3-OH dehydrogenase of asnovolin H to yield chemesin D. There are two branches to synthesize asnovolin A from chemesin D. In one branch, chemesin D undergoes Baeyer-Villiger oxidation by nvfH, methylation by nvfJ, and enoyl reduction by the nvfM D enoylreductase that reduces the double bond between C-5'and C-6', to form respectively asnovolin I, asnovolin K, and asnovolin A. In the other branch, the methylation precedes the Baeyer-Villiger oxidation and the enoyl reduction to yield asnovolin A via the asnovolin J intermediate. Asnovolin A is further converted to fumigatonoid A by the Fe(II)/2-oxoglutarate-dependent dioxygenase nvfI that catalyzes an endoperoxidation reaction. The alpha/beta hydrolase nvfD then acts as an epimerase that converts fumigatonoid A to its C-5' epimer, which then undergoes spontaneous or nvfD-catalyzed lactonization. The following step utilizes the ketoreductase nvfG to produce fumigatonoid B. The dioxygenase nvfE further converts fumigatonoid B into fumigatonoid C. Finally the Fe(II)/2-oxoglutarate-dependent dioxygenase nvfF catalyzes two rounds of oxidation to transform fumigatonoid C into the end product, novofumigatonin A. This Aspergillus novofumigatus (strain IBT 16806) protein is Asnovolin H dehydrogenase nvfC.